We begin with the raw amino-acid sequence, 496 residues long: Probable cytosol aminopeptidase (496 aa).

Mn(2+) contacts are provided by Lys-266 and Asp-271. Lys-278 is an active-site residue. Residues Asp-289, Asp-348, and Glu-350 each coordinate Mn(2+). The active site involves Arg-352.

Belongs to the peptidase M17 family. The cofactor is Mn(2+).

Its subcellular location is the cytoplasm. It catalyses the reaction Release of an N-terminal amino acid, Xaa-|-Yaa-, in which Xaa is preferably Leu, but may be other amino acids including Pro although not Arg or Lys, and Yaa may be Pro. Amino acid amides and methyl esters are also readily hydrolyzed, but rates on arylamides are exceedingly low.. The catalysed reaction is Release of an N-terminal amino acid, preferentially leucine, but not glutamic or aspartic acids.. Functionally, presumably involved in the processing and regular turnover of intracellular proteins. Catalyzes the removal of unsubstituted N-terminal amino acids from various peptides. In Pseudomonas syringae pv. syringae (strain B728a), this protein is Probable cytosol aminopeptidase.